Consider the following 73-residue polypeptide: Guanine nucleotide-binding protein G(I)/G(S)/G(O) subunit gamma-11 (73 aa).

Residues 54 to 73 (VKGIPEDKNPFKEKGSCIIS) form a disordered region. A Cysteine methyl ester modification is found at cysteine 70. Residue cysteine 70 is the site of S-farnesyl cysteine attachment. A propeptide spans 71–73 (IIS) (removed in mature form).

The protein belongs to the G protein gamma family. In terms of assembly, g proteins are composed of 3 units, alpha, beta and gamma. Interacts with beta-1 and beta-3, but not with beta-2.

The protein localises to the cell membrane. Its function is as follows. Guanine nucleotide-binding proteins (G proteins) are involved as a modulator or transducer in various transmembrane signaling systems. The beta and gamma chains are required for the GTPase activity, for replacement of GDP by GTP, and for G protein-effector interaction. The sequence is that of Guanine nucleotide-binding protein G(I)/G(S)/G(O) subunit gamma-11 (GNG11) from Bos taurus (Bovine).